We begin with the raw amino-acid sequence, 274 residues long: Penicillin-insensitive murein endopeptidase (274 aa).

Positions 1–19 (MNKTAIALLALLASSVSLA) are cleaved as a signal peptide. 3 cysteine pairs are disulfide-bonded: Cys-44–Cys-265, Cys-187–Cys-235, and Cys-216–Cys-223. Residues His-110, His-113, Asp-120, Asp-147, His-150, and His-211 each contribute to the Zn(2+) site. The segment at 227 to 274 (PLPPPGDGCGAELQSWFEPPKPGTTKPEKKTPPPLPPSCQALLDEHVI) is disordered.

Belongs to the peptidase M74 family. Dimer. Requires Zn(2+) as cofactor.

The protein resides in the periplasm. Functionally, murein endopeptidase that cleaves the D-alanyl-meso-2,6-diamino-pimelyl amide bond that connects peptidoglycan strands. Likely plays a role in the removal of murein from the sacculus. The sequence is that of Penicillin-insensitive murein endopeptidase from Shigella dysenteriae serotype 1 (strain Sd197).